The following is a 182-amino-acid chain: Adenine phosphoribosyltransferase (182 aa).

It belongs to the purine/pyrimidine phosphoribosyltransferase family. In terms of assembly, homodimer.

It localises to the cytoplasm. The catalysed reaction is AMP + diphosphate = 5-phospho-alpha-D-ribose 1-diphosphate + adenine. Its pathway is purine metabolism; AMP biosynthesis via salvage pathway; AMP from adenine: step 1/1. Its function is as follows. Catalyzes a salvage reaction resulting in the formation of AMP, that is energically less costly than de novo synthesis. The protein is Adenine phosphoribosyltransferase of Campylobacter curvus (strain 525.92).